The chain runs to 351 residues: Dihydroorotate dehydrogenase (quinone) (351 aa).

Residues Ala-67–Lys-71 and Thr-91 contribute to the FMN site. Lys-71 is a binding site for substrate. Asn-116–Phe-120 contributes to the substrate binding site. Asn-145 and Asn-178 together coordinate FMN. Substrate is bound at residue Asn-178. Residue Ser-181 is the Nucleophile of the active site. Asn-183 contacts substrate. FMN contacts are provided by Lys-214 and Thr-242. Asn-243–Thr-244 lines the substrate pocket. FMN is bound by residues Gly-262, Gly-291, and Tyr-312 to Ser-313.

Belongs to the dihydroorotate dehydrogenase family. Type 2 subfamily. In terms of assembly, monomer. FMN serves as cofactor.

It localises to the cell membrane. The catalysed reaction is (S)-dihydroorotate + a quinone = orotate + a quinol. It functions in the pathway pyrimidine metabolism; UMP biosynthesis via de novo pathway; orotate from (S)-dihydroorotate (quinone route): step 1/1. Catalyzes the conversion of dihydroorotate to orotate with quinone as electron acceptor. This chain is Dihydroorotate dehydrogenase (quinone), found in Helicobacter pylori (strain HPAG1).